Here is a 273-residue protein sequence, read N- to C-terminus: 2,3,4,5-tetrahydropyridine-2,6-dicarboxylate N-succinyltransferase (273 aa).

Substrate is bound by residues Arg-104 and Asp-141.

This sequence belongs to the transferase hexapeptide repeat family. In terms of assembly, homotrimer.

It is found in the cytoplasm. It catalyses the reaction (S)-2,3,4,5-tetrahydrodipicolinate + succinyl-CoA + H2O = (S)-2-succinylamino-6-oxoheptanedioate + CoA. It functions in the pathway amino-acid biosynthesis; L-lysine biosynthesis via DAP pathway; LL-2,6-diaminopimelate from (S)-tetrahydrodipicolinate (succinylase route): step 1/3. This is 2,3,4,5-tetrahydropyridine-2,6-dicarboxylate N-succinyltransferase from Azoarcus sp. (strain BH72).